We begin with the raw amino-acid sequence, 523 residues long: Sorting nexin-2 (523 aa).

The interval 1–104 (MAAEREPPPL…EPSPAVTPVT (104 aa)) is disordered. 2 stretches are compositionally biased toward low complexity: residues 27 to 48 (LFTS…TSLP) and 93 to 104 (SSEPSPAVTPVT). The residue at position 97 (Ser97) is a Phosphoserine. Thr101 and Thr104 each carry phosphothreonine. 2 positions are modified to phosphoserine: Ser117 and Ser119. Residues 140–269 (FDIEIGVSDP…QFLESSELPR (130 aa)) enclose the PX domain. A 1,2-diacyl-sn-glycero-3-phospho-(1D-myo-inositol-3-phosphate)-binding residues include Arg183, Ser185, Lys211, and Arg235. Ser185 bears the Phosphoserine mark. Positions 260–523 (QFLESSELPR…AFLPEAKAIA (264 aa)) are interaction with RhoG. Position 277 is a phosphoserine (Ser277). Residues 278–295 (GAGILRMVNKAADAVNKM) form a membrane-binding amphipathic helix region. The BAR domain maps to 299-523 (MNESDAWFEE…AFLPEAKAIA (225 aa)). Position 473 is an N6-acetyllysine (Lys473).

This sequence belongs to the sorting nexin family. Predominantly forms heterodimers with BAR domain-containing sorting nexins SNX5, SNX6 and SNX32; can self-associate to form homodimers. The heterodimers are proposed to self-assemble into helical arrays on the membrane to stabilize and expand local membrane curvature underlying endosomal tubule formation. Thought to be a component of the originally described retromer complex (also called SNX-BAR retromer) which is a pentamer containing the heterotrimeric retromer cargo-selective complex (CSC), also described as vacuolar protein sorting subcomplex (VPS), and a heterodimeric membrane-deforming subcomplex formed between SNX1 or SNX2 and SNX5 or SNX6 (also called SNX-BAR subcomplex); the respective CSC and SNX-BAR subcomplexes associate with low affinity. Interacts with SNX5, SNX6, SNX32, VPS26A, VPS29, VPS35, FNBP1, KALRN, RHOG (GDP-bound form).

The protein localises to the early endosome membrane. Its subcellular location is the cell projection. The protein resides in the lamellipodium. Functionally, involved in several stages of intracellular trafficking. Interacts with membranes containing phosphatidylinositol 3-phosphate (PtdIns(3P)) or phosphatidylinositol 3,5-bisphosphate (PtdIns(3,5)P2). Acts in part as component of the retromer membrane-deforming SNX-BAR subcomplex. The SNX-BAR retromer mediates retrograde transport of cargo proteins from endosomes to the trans-Golgi network (TGN) and is involved in endosome-to-plasma membrane transport for cargo protein recycling. The SNX-BAR subcomplex functions to deform the donor membrane into a tubular profile called endosome-to-TGN transport carrier (ETC). Can sense membrane curvature and has in vitro vesicle-to-membrane remodeling activity. Required for retrograde endosome-to-TGN transport of TGN38. Promotes KALRN- and RHOG-dependent but retromer-independent membrane remodeling such as lamellipodium formation; the function is dependent on GEF activity of KALRN. The polypeptide is Sorting nexin-2 (SNX2) (Pongo abelii (Sumatran orangutan)).